Here is a 341-residue protein sequence, read N- to C-terminus: Phenylalanine--tRNA ligase alpha subunit (341 aa).

Mg(2+) is bound at residue E254.

This sequence belongs to the class-II aminoacyl-tRNA synthetase family. Phe-tRNA synthetase alpha subunit type 1 subfamily. Tetramer of two alpha and two beta subunits. Mg(2+) serves as cofactor.

Its subcellular location is the cytoplasm. The catalysed reaction is tRNA(Phe) + L-phenylalanine + ATP = L-phenylalanyl-tRNA(Phe) + AMP + diphosphate + H(+). The sequence is that of Phenylalanine--tRNA ligase alpha subunit from Chlorobaculum tepidum (strain ATCC 49652 / DSM 12025 / NBRC 103806 / TLS) (Chlorobium tepidum).